Here is a 1047-residue protein sequence, read N- to C-terminus: [F-actin]-monooxygenase MICAL1 (1047 aa).

The tract at residues 1–489 is monooxygenase domain; sequence MASPTSTNPA…QDLYDIMDKE (489 aa). Residues cysteine 95, 114-116, 121-123, phenylalanine 181, tyrosine 293, and aspartate 393 each bind FAD; these read EKR and RHN. A Phosphothreonine modification is found at threonine 475. In terms of domain architecture, Calponin-homology (CH) spans 507 to 611; the sequence is SAGTEELLHW…YLSHFHSAFK (105 aa). A Phosphoserine modification is found at serine 616. A disordered region spans residues 644–672; that stretch reads RTKVEEETPCTEEPPVSEPSVPPALPSEH. The segment covering 659 to 668 has biased composition (pro residues); that stretch reads VSEPSVPPAL. Residues 679–741 enclose the LIM zinc-binding domain; the sequence is DVCELCGKRL…LQHLPQEDQK (63 aa). Residues cysteine 681, cysteine 684, histidine 702, cysteine 705, cysteine 708, cysteine 711, cysteine 731, and histidine 734 each coordinate Zn(2+). Disordered stretches follow at residues 739–787 and 849–872; these read DQKE…QPAR and EKGE…PPPL. Polar residues predominate over residues 745 to 767; the sequence is NNGSPENQELPTPGDSTTQSGPS. Phosphoserine is present on residues serine 777 and serine 781. Residues 851–868 show a composition bias toward acidic residues; sequence GEEEEEEEEEEEEEEEEL. The bMERB domain maps to 905–1047; that stretch reads KEEEMKRFCK…EERRLREMPV (143 aa). Positions 912-996 form a coiled coil; that stretch reads FCKAQAIQRR…LEEKQRQLDH (85 aa).

It belongs to the Mical family. In terms of assembly, interacts with STK38 and STK38L. Associates with the SH3 domain of NEDD9. Interacts with VIM and PLXNA3. Interacts with RAB1B, RAB8A, RAB10, RAB13 and RAB15 (in their GTP-bound forms); binding to RAB1B is of low affinity compared to other Rab proteins; at least in case of RAB8A and RAB10 can bind 2 molecules of the Rab proteins simultaneously. Interacts with GRAF1/ARHGAP26, GRAF2/ARHGAP10, RAB8A, RAB8B and RAB10; may bind simultaneously to GRAFs and Rabs and connects GRAFs to Rabs. Does not interact with RAB1 and RAB11A. FAD serves as cofactor.

It localises to the cytoplasm. It is found in the cytoskeleton. The protein resides in the endosome membrane. The protein localises to the midbody. The enzyme catalyses L-methionyl-[F-actin] + NADPH + O2 + H(+) = L-methionyl-(R)-S-oxide-[F-actin] + NADP(+) + H2O. The catalysed reaction is NADPH + O2 + H(+) = H2O2 + NADP(+). Its function is as follows. Monooxygenase that promotes depolymerization of F-actin by mediating oxidation of specific methionine residues on actin to form methionine-sulfoxide, resulting in actin filament disassembly and preventing repolymerization. In the absence of actin, it also functions as a NADPH oxidase producing H(2)O(2). Acts as a cytoskeletal regulator that connects NEDD9 to intermediate filaments. Also acts as a negative regulator of apoptosis via its interaction with STK38 and STK38L; acts by antagonizing STK38 and STK38L activation by MST1/STK4. Involved in regulation of lamina-specific connectivity in the nervous system such as the development of lamina-restricted hippocampal connections. Through redox regulation of the actin cytoskeleton controls the intracellular distribution of secretory vesicles containing L1/neurofascin/NgCAM family proteins in neurons, thereby regulating their cell surface levels. May act as Rab effector protein and play a role in vesicle trafficking. Promotes endosomal tubule extension by associating with RAB8 (RAB8A or RAB8B), RAB10 and GRAF (GRAF1/ARHGAP26 or GRAF2/ARHGAP10) on the endosomal membrane which may connect GRAFs to Rabs, thereby participating in neosynthesized Rab8-Rab10-Rab11-dependent protein export. The protein is [F-actin]-monooxygenase MICAL1 (Mical1) of Rattus norvegicus (Rat).